A 191-amino-acid chain; its full sequence is Cytochrome c oxidase assembly protein CtaG (191 aa).

The Cytoplasmic portion of the chain corresponds to 1-9; the sequence is MSLSPHQKT. Residues 10–30 form a helical; Signal-anchor for type II membrane protein membrane-spanning segment; that stretch reads AGGLVLVVAVMGAASFAAVPF. Over 31 to 191 the chain is Periplasmic; sequence YNWFCRVTGF…LAAESATDVN (161 aa).

The protein belongs to the COX11/CtaG family.

Its subcellular location is the cell inner membrane. In terms of biological role, exerts its effect at some terminal stage of cytochrome c oxidase synthesis, probably by being involved in the insertion of the copper B into subunit I. The chain is Cytochrome c oxidase assembly protein CtaG from Cereibacter sphaeroides (strain ATCC 17023 / DSM 158 / JCM 6121 / CCUG 31486 / LMG 2827 / NBRC 12203 / NCIMB 8253 / ATH 2.4.1.) (Rhodobacter sphaeroides).